We begin with the raw amino-acid sequence, 280 residues long: Energy-coupling factor transporter ATP-binding protein EcfA1 (280 aa).

Residues 6–241 (LRTENISFQY…SHMLQEIGLD (236 aa)) form the ABC transporter domain. 40 to 47 (GQNGSGKS) provides a ligand contact to ATP.

This sequence belongs to the ABC transporter superfamily. Energy-coupling factor EcfA family. As to quaternary structure, forms a stable energy-coupling factor (ECF) transporter complex composed of 2 membrane-embedded substrate-binding proteins (S component), 2 ATP-binding proteins (A component) and 2 transmembrane proteins (T component).

The protein localises to the cell membrane. Its function is as follows. ATP-binding (A) component of a common energy-coupling factor (ECF) ABC-transporter complex. Unlike classic ABC transporters this ECF transporter provides the energy necessary to transport a number of different substrates. In Bacillus thuringiensis subsp. konkukian (strain 97-27), this protein is Energy-coupling factor transporter ATP-binding protein EcfA1.